Consider the following 258-residue polypeptide: Phosphate import ATP-binding protein PstB 3 (258 aa).

Residues 10–253 (MTARSLAVHY…PANSLTQGYI (244 aa)) enclose the ABC transporter domain. 42–49 (GPSGCGKS) is an ATP binding site.

It belongs to the ABC transporter superfamily. Phosphate importer (TC 3.A.1.7) family. In terms of assembly, the complex is composed of two ATP-binding proteins (PstB), two transmembrane proteins (PstC and PstA) and a solute-binding protein (PstS).

It is found in the cell inner membrane. The enzyme catalyses phosphate(out) + ATP + H2O = ADP + 2 phosphate(in) + H(+). Functionally, part of the ABC transporter complex PstSACB involved in phosphate import. Responsible for energy coupling to the transport system. The chain is Phosphate import ATP-binding protein PstB 3 from Paramagnetospirillum magneticum (strain ATCC 700264 / AMB-1) (Magnetospirillum magneticum).